The sequence spans 423 residues: Serine hydroxymethyltransferase (423 aa).

119 to 121 contacts (6S)-5,6,7,8-tetrahydrofolate; that stretch reads GHI. Lys-225 is subject to N6-(pyridoxal phosphate)lysine.

The protein belongs to the SHMT family. Homodimer. Pyridoxal 5'-phosphate is required as a cofactor.

The protein resides in the cytoplasm. The enzyme catalyses (6R)-5,10-methylene-5,6,7,8-tetrahydrofolate + glycine + H2O = (6S)-5,6,7,8-tetrahydrofolate + L-serine. The protein operates within one-carbon metabolism; tetrahydrofolate interconversion. Its pathway is amino-acid biosynthesis; glycine biosynthesis; glycine from L-serine: step 1/1. In terms of biological role, catalyzes the reversible interconversion of serine and glycine with tetrahydrofolate (THF) serving as the one-carbon carrier. Also exhibits THF-independent aldolase activity toward beta-hydroxyamino acids, producing glycine and aldehydes, via a retro-aldol mechanism. In Methanocella arvoryzae (strain DSM 22066 / NBRC 105507 / MRE50), this protein is Serine hydroxymethyltransferase.